Reading from the N-terminus, the 37-residue chain is Large ribosomal subunit protein bL36c (37 aa).

The protein belongs to the bacterial ribosomal protein bL36 family.

It localises to the plastid. The protein is Large ribosomal subunit protein bL36c of Cuscuta reflexa (Southern Asian dodder).